The following is a 272-amino-acid chain: uncharacterized protein (272 aa).

Positions 101–130 are disordered; it reads CPTGKKNKAPSSLIPKISKTSTSSLTKEDE. Residues 110–125 show a composition bias toward low complexity; that stretch reads PSSLIPKISKTSTSSL. Ser-142 is subject to Phosphoserine.

This is an uncharacterized protein from Arabidopsis thaliana (Mouse-ear cress).